The following is a 219-amino-acid chain: Trafficking protein particle complex subunit 4 (219 aa).

It belongs to the TRAPP small subunits family. TRAPPC4 subfamily. Component of the multisubunit TRAPP (transport protein particle) complex, which includes at least TRAPPC2, TRAPPC2L, TRAPPC3, TRAPPC3L, TRAPPC4, TRAPPC5, TRAPPC8, TRAPPC9, TRAPPC10, TRAPPC11 and TRAPPC12. Interacts with SDC2.

It localises to the postsynaptic cell membrane. The protein resides in the golgi apparatus membrane. Its subcellular location is the endoplasmic reticulum. It is found in the vesicle. Core component of the TRAPP complexes which has a function of guanine nucleotide exchange factor activity for Rab1 GTPase. Plays a role in vesicular transport from endoplasmic reticulum to Golgi and autophagy. May play a role in dendrite postsynaptic membrane trafficking. The protein is Trafficking protein particle complex subunit 4 of Homo sapiens (Human).